Here is a 138-residue protein sequence, read N- to C-terminus: NADH-quinone oxidoreductase subunit A (138 aa).

3 consecutive transmembrane segments (helical) span residues 8-28 (FGAV…GYLT), 63-83 (FYVV…LFPW), and 93-113 (FALI…AYAW).

The protein belongs to the complex I subunit 3 family. As to quaternary structure, NDH-1 is composed of 14 different subunits. Subunits NuoA, H, J, K, L, M, N constitute the membrane sector of the complex.

The protein resides in the cell inner membrane. It carries out the reaction a quinone + NADH + 5 H(+)(in) = a quinol + NAD(+) + 4 H(+)(out). NDH-1 shuttles electrons from NADH, via FMN and iron-sulfur (Fe-S) centers, to quinones in the respiratory chain. The immediate electron acceptor for the enzyme in this species is believed to be a menaquinone. Couples the redox reaction to proton translocation (for every two electrons transferred, four hydrogen ions are translocated across the cytoplasmic membrane), and thus conserves the redox energy in a proton gradient. The sequence is that of NADH-quinone oxidoreductase subunit A from Prosthecochloris aestuarii (strain DSM 271 / SK 413).